A 250-amino-acid polypeptide reads, in one-letter code: MWLTFNQVARRRRPLAPRRRRWRRRYWXRRRRIPANRRGHRTNRVYRFRFVREFGQVLQKGTGGSQLSFGTDGINIILDDFLDWGTINWRLPFEDYRIRLAKVEMRPLNESWEEWKGFGHNVPIQDNHLEDFFKKTRLDADPLANWDGARKWDLRKGFKRLFKPRPQLSVTDTDAANVTAALWLNNPKSLWIPIMKKSDQNLPSSGTRVKHYGLAFSWPEPTPNQMDYQVKVTIYCEFRQMNLTHLATPK.

The DNA-binding stretch occupies residues M1 to G39. The tract at residues A9 to T42 is nuclear localization signals.

The protein belongs to the circoviridae capsid protein family. In terms of assembly, homomultimer. Assembles in the nucleus, presumably in an immature form, then migrates to the cytoplasm once assembled as mature virion. Interacts with Rep; this interaction relocates Rep into the nucleus.

The protein localises to the host nucleus. The protein resides in the virion. Its function is as follows. Self-assembles to form the virion icosahedral capsid with a T=1 symmetry. This very small capsid (17 - 22 nm in diameter) allows the virus to be very stable in the environment and resistant to some disinfectants, including detergents. Essential for the initial attachment to heparan sulfate moieties and chondroitin sulfate B of the host cell surface proteoglycans. After attachment, the virus is endocytosed and traffics to the nucleus. The capsid protein binds and transports the viral genome and Rep across the nuclear envelope. In Serinus (CaCV), this protein is Probable capsid protein (Cap).